Here is a 512-residue protein sequence, read N- to C-terminus: Maturase K (512 aa).

This sequence belongs to the intron maturase 2 family. MatK subfamily.

The protein localises to the plastid. Its subcellular location is the chloroplast. Its function is as follows. Usually encoded in the trnK tRNA gene intron. Probably assists in splicing its own and other chloroplast group II introns. This Amorphophallus paeoniifolius (Whitespot giant arum) protein is Maturase K.